The primary structure comprises 121 residues: uncharacterized protein (121 aa).

Transmembrane regions (helical) follow at residues 16–36 and 74–94; these read GFMV…GFAV and LYIA…MKTI.

It localises to the cell membrane. This is an uncharacterized protein from Bacillus subtilis (strain 168).